We begin with the raw amino-acid sequence, 112 residues long: Large ribosomal subunit protein uL24 (112 aa).

This sequence belongs to the universal ribosomal protein uL24 family. As to quaternary structure, part of the 50S ribosomal subunit.

One of two assembly initiator proteins, it binds directly to the 5'-end of the 23S rRNA, where it nucleates assembly of the 50S subunit. Functionally, one of the proteins that surrounds the polypeptide exit tunnel on the outside of the subunit. The polypeptide is Large ribosomal subunit protein uL24 (Magnetococcus marinus (strain ATCC BAA-1437 / JCM 17883 / MC-1)).